The primary structure comprises 380 residues: Probable protein phosphatase 2C 63 (380 aa).

The 304-residue stretch at 35–338 (DYSIAVVQAN…DDISVIVVYL (304 aa)) folds into the PPM-type phosphatase domain. Residues aspartate 66, glycine 67, aspartate 270, and aspartate 329 each contribute to the Mn(2+) site.

This sequence belongs to the PP2C family. Requires Mg(2+) as cofactor. Mn(2+) is required as a cofactor.

It carries out the reaction O-phospho-L-seryl-[protein] + H2O = L-seryl-[protein] + phosphate. The catalysed reaction is O-phospho-L-threonyl-[protein] + H2O = L-threonyl-[protein] + phosphate. Functionally, may dephosphorylate and repress plasma membrane H(+)-ATPases (PM H(+)-ATPases, e.g. AHA1 and AHA2), thus influencing negatively plant growth and fitness. The polypeptide is Probable protein phosphatase 2C 63 (Arabidopsis thaliana (Mouse-ear cress)).